Reading from the N-terminus, the 130-residue chain is Small ribosomal subunit protein uS8 (130 aa).

The protein belongs to the universal ribosomal protein uS8 family. As to quaternary structure, part of the 30S ribosomal subunit.

One of the primary rRNA binding proteins, it binds directly to 16S rRNA central domain where it helps coordinate assembly of the platform of the 30S subunit. This chain is Small ribosomal subunit protein uS8, found in Pyrobaculum calidifontis (strain DSM 21063 / JCM 11548 / VA1).